The chain runs to 442 residues: Thymidine phosphorylase (442 aa).

Belongs to the thymidine/pyrimidine-nucleoside phosphorylase family. In terms of assembly, homodimer.

It catalyses the reaction thymidine + phosphate = 2-deoxy-alpha-D-ribose 1-phosphate + thymine. The protein operates within pyrimidine metabolism; dTMP biosynthesis via salvage pathway; dTMP from thymine: step 1/2. In terms of biological role, the enzymes which catalyze the reversible phosphorolysis of pyrimidine nucleosides are involved in the degradation of these compounds and in their utilization as carbon and energy sources, or in the rescue of pyrimidine bases for nucleotide synthesis. This chain is Thymidine phosphorylase, found in Vibrio vulnificus (strain CMCP6).